The sequence spans 387 residues: Capsid protein (387 aa).

Over residues Met-1–Lys-33 the composition is skewed to basic residues. Disordered regions lie at residues Met-1–Ala-47 and Lys-365–Asn-387. 2 short sequence motifs (nuclear localization signal) span residues Pro-8–Arg-15 and Thr-30–Asp-37. Over residues Asn-370–Ala-379 the composition is skewed to low complexity.

It localises to the host nucleus. The protein localises to the virion. Self-assembles to form the virion icosahedral capsid. The protein is Capsid protein of Chaetoceros protobacilladnavirus 2 (Chaetoceros sp. DNA virus 7).